The chain runs to 238 residues: Androgen-induced gene 1 protein (238 aa).

The Cytoplasmic portion of the chain corresponds to 1–12 (MALVPCQVLRMA). Residues 13 to 30 (ILLSYCSILCNYKAIEMP) traverse the membrane as a helical segment. Residues 31–44 (SHQTYGGSWKFLTF) are Extracellular-facing. Residues 45–67 (IDLVIQAVFFGICVLTDLSSLLT) form a helical membrane-spanning segment. Over 68-87 (RGSGNQEQERQLKKLISLRD) the chain is Cytoplasmic. The chain crosses the membrane as a helical span at residues 88 to 110 (WMLAVLAFPVGVFVVAVFWIIYA). Topologically, residues 111 to 124 (YDREMIYPKLLDNF) are extracellular. The chain crosses the membrane as a helical span at residues 125 to 144 (IPGWLNHGMHTTVLPFILIE). Residues 145–156 (MRTSHHQYPSRS) are Cytoplasmic-facing. The helical transmembrane segment at 157–179 (SGLTAICTFSVGYILWVCWVHHV) threads the bilayer. Residues 180 to 193 (TGMWVYPFLEHIGP) lie on the Extracellular side of the membrane. Residues 194–216 (GARIIFFGSTTILMNFLYLLGEV) form a helical membrane-spanning segment. Over 217–238 (LNNYIWDTQKSMEEEKEKPKLE) the chain is Cytoplasmic.

This sequence belongs to the AIG1 family. In terms of tissue distribution, highly expressed in heart, ovary, testis, liver, and kidney, at lower levels in spleen, prostate, brain, skeletal muscle, pancreas, small intestine and colon, and undetected in peripheral blood leukocytes, thymus, lung and placenta. AIG1 expression is higher in hair follicles from males than from females.

The protein localises to the cell membrane. It catalyses the reaction 9-hexadecanoyloxy-octadecanoate + H2O = 9-hydroxy-octadecanoate + hexadecanoate + H(+). The enzyme catalyses 12-hexadecanoyloxy-octadecanoate + H2O = 12-hydroxyoctadecanoate + hexadecanoate + H(+). The catalysed reaction is 9-(9Z-hexadecenoyloxy)-octadecanoate + H2O = (9Z)-hexadecenoate + 9-hydroxy-octadecanoate + H(+). It carries out the reaction 12-(9Z-hexadecenoyloxy)-octadecanoate + H2O = 12-hydroxyoctadecanoate + (9Z)-hexadecenoate + H(+). It catalyses the reaction 13-(9Z-hexadecenoyloxy)-octadecanoate + H2O = 13-hydroxy-octadecanoate + (9Z)-hexadecenoate + H(+). The enzyme catalyses 9-octadecanoyloxy-octadecanoate + H2O = 9-hydroxy-octadecanoate + octadecanoate + H(+). The catalysed reaction is 12-octadecanoyloxy-octadecanoate + H2O = 12-hydroxyoctadecanoate + octadecanoate + H(+). It carries out the reaction 13-octadecanoyloxy-octadecanoate + H2O = 13-hydroxy-octadecanoate + octadecanoate + H(+). It catalyses the reaction 9-(9Z-octadecenoyloxy)-octadecanoate + H2O = 9-hydroxy-octadecanoate + (9Z)-octadecenoate + H(+). The enzyme catalyses 12-(9Z-octadecenoyloxy)-octadecanoate + H2O = 12-hydroxyoctadecanoate + (9Z)-octadecenoate + H(+). The catalysed reaction is 13-(9Z-octadecenoyloxy)-octadecanoate + H2O = 13-hydroxy-octadecanoate + (9Z)-octadecenoate + H(+). It carries out the reaction 5-(9Z-hexadecenoyloxy)-octadecanoate + H2O = 5-hydroxy-octadecanoate + (9Z)-hexadecenoate + H(+). With respect to regulation, inhibited by N-hydroxyhydantoin carbamate JJH260 and beta-lactone KC01. In terms of biological role, hydrolyzes bioactive fatty-acid esters of hydroxy-fatty acids (FAHFAs), but not other major classes of lipids. Show a preference for FAHFAs with branching distal from the carboxylate head group of the lipids. This Homo sapiens (Human) protein is Androgen-induced gene 1 protein (AIG1).